Reading from the N-terminus, the 285-residue chain is MSEHNVYGAAQPAQPGQPAQPRTRIRTHHLQKMKAEGHKWAMLTAYDYSTARIFDEAGIPVLLVGDSAANVVYGYDTTVPVSIDELIPLVRGVVRGAPHALVVADLPFGSYEAGPAAALAAATRFMKEGGAHAVKLEGGERVAEQIAHLTAAGIPVMAHIGFTPQSVNSLGGFRVQGRGDAAEQTIADAIAVAEAGAFSVVMEMVPAELATQITGKLTIPTIGIGAGPNCDGQVLVWQDMAGMSSGKSARFVKRFADIGGELRRAATQYAHEVAAGVFPADEHCF.

The disordered stretch occupies residues methionine 1–arginine 22. A compositionally biased stretch (low complexity) spans glycine 8–proline 21. Residues aspartate 66 and aspartate 105 each contribute to the Mg(2+) site. 3-methyl-2-oxobutanoate is bound by residues aspartate 66 to serine 67, aspartate 105, and lysine 135. Glutamate 137 is a Mg(2+) binding site. Glutamate 203 (proton acceptor) is an active-site residue.

It belongs to the PanB family. As to quaternary structure, homodecamer; pentamer of dimers. It depends on Mg(2+) as a cofactor.

It localises to the cytoplasm. The enzyme catalyses 3-methyl-2-oxobutanoate + (6R)-5,10-methylene-5,6,7,8-tetrahydrofolate + H2O = 2-dehydropantoate + (6S)-5,6,7,8-tetrahydrofolate. It participates in cofactor biosynthesis; (R)-pantothenate biosynthesis; (R)-pantoate from 3-methyl-2-oxobutanoate: step 1/2. Catalyzes the reversible reaction in which hydroxymethyl group from 5,10-methylenetetrahydrofolate is transferred onto alpha-ketoisovalerate to form ketopantoate. The polypeptide is 3-methyl-2-oxobutanoate hydroxymethyltransferase (Mycolicibacterium paratuberculosis (strain ATCC BAA-968 / K-10) (Mycobacterium paratuberculosis)).